The chain runs to 407 residues: DNA primase DnaG (407 aa).

Residues Asp172–Pro248 form the Toprim domain. Residues Glu178, Asp222, and Asp224 each contribute to the Mg(2+) site. Residues Ala279–Gln304 form a disordered region. Positions Ala288–Ala300 are enriched in pro residues.

The protein belongs to the archaeal DnaG primase family. In terms of assembly, forms a ternary complex with MCM helicase and DNA. Component of the archaeal exosome complex. The cofactor is Mg(2+).

It catalyses the reaction ssDNA + n NTP = ssDNA/pppN(pN)n-1 hybrid + (n-1) diphosphate.. Functionally, RNA polymerase that catalyzes the synthesis of short RNA molecules used as primers for DNA polymerase during DNA replication. Also part of the exosome, which is a complex involved in RNA degradation. Acts as a poly(A)-binding protein that enhances the interaction between heteromeric, adenine-rich transcripts and the exosome. The chain is DNA primase DnaG from Pyrobaculum calidifontis (strain DSM 21063 / JCM 11548 / VA1).